The sequence spans 232 residues: Thiamine import ATP-binding protein ThiQ (232 aa).

The ABC transporter domain occupies 2–230 (LKLTDITWLY…KASASALLGI (229 aa)). 32-39 (GPSGAGKS) is an ATP binding site.

It belongs to the ABC transporter superfamily. Thiamine importer (TC 3.A.1.19.1) family. The complex is composed of two ATP-binding proteins (ThiQ), two transmembrane proteins (ThiP) and a solute-binding protein (ThiB).

It localises to the cell inner membrane. It catalyses the reaction thiamine(out) + ATP + H2O = thiamine(in) + ADP + phosphate + H(+). Part of the ABC transporter complex ThiBPQ involved in thiamine import. Responsible for energy coupling to the transport system. This is Thiamine import ATP-binding protein ThiQ from Escherichia coli O6:K15:H31 (strain 536 / UPEC).